The chain runs to 205 residues: Small ribosomal subunit protein uS4 (205 aa).

The S4 RNA-binding domain occupies serine 95–alanine 156.

This sequence belongs to the universal ribosomal protein uS4 family. As to quaternary structure, part of the 30S ribosomal subunit. Contacts protein S5. The interaction surface between S4 and S5 is involved in control of translational fidelity.

Functionally, one of the primary rRNA binding proteins, it binds directly to 16S rRNA where it nucleates assembly of the body of the 30S subunit. In terms of biological role, with S5 and S12 plays an important role in translational accuracy. The chain is Small ribosomal subunit protein uS4 from Mycoplasma pneumoniae (strain ATCC 29342 / M129 / Subtype 1) (Mycoplasmoides pneumoniae).